The primary structure comprises 173 residues: ATP synthase subunit b (173 aa).

The chain crosses the membrane as a helical span at residues 12 to 34; that stretch reads AFGNLYAIGWSAVNFLVLLALMY.

It belongs to the ATPase B chain family. F-type ATPases have 2 components, F(1) - the catalytic core - and F(0) - the membrane proton channel. F(1) has five subunits: alpha(3), beta(3), gamma(1), delta(1), epsilon(1). F(0) has three main subunits: a(1), b(2) and c(10-14). The alpha and beta chains form an alternating ring which encloses part of the gamma chain. F(1) is attached to F(0) by a central stalk formed by the gamma and epsilon chains, while a peripheral stalk is formed by the delta and b chains.

It localises to the cell membrane. F(1)F(0) ATP synthase produces ATP from ADP in the presence of a proton or sodium gradient. F-type ATPases consist of two structural domains, F(1) containing the extramembraneous catalytic core and F(0) containing the membrane proton channel, linked together by a central stalk and a peripheral stalk. During catalysis, ATP synthesis in the catalytic domain of F(1) is coupled via a rotary mechanism of the central stalk subunits to proton translocation. In terms of biological role, component of the F(0) channel, it forms part of the peripheral stalk, linking F(1) to F(0). This chain is ATP synthase subunit b, found in Syntrophomonas wolfei subsp. wolfei (strain DSM 2245B / Goettingen).